Consider the following 306-residue polypeptide: MTFTPGQAEVFTEIEKIGQLTRAMRKAGRPVALVPTMGALHEGHLSLVQAAQQIPGALVVVSIFVNPLQFAEGEDLDAYPRTLDEDVAKLKAAGVDAVFAPSPREMYPNGPRTTIHPGEAGRILEGAHRPTHFAGVLTVVNKLFTITHCDHAFFGEKDYQQLLLIQQIVTDLNMEVQVHGVPIVREADGLAKSSRNVYLSDEERELALTLSAALTAGAFVAEQGPAAVLQTAGSILDAASGIDVDYLELRGTDLSDTPEDGEARLLVAARVGTTRLIDNVGVPLGTGFKGLDDGGEGSAPADNAGE.

Residue 37-44 (MGALHEGH) coordinates ATP. The Proton donor role is filled by H44. Q69 provides a ligand contact to (R)-pantoate. Q69 is a binding site for beta-alanine. Residue 155–158 (GEKD) coordinates ATP. Q161 is a binding site for (R)-pantoate. ATP contacts are provided by residues V184 and 192–195 (KSSR).

Belongs to the pantothenate synthetase family. As to quaternary structure, homodimer.

Its subcellular location is the cytoplasm. The enzyme catalyses (R)-pantoate + beta-alanine + ATP = (R)-pantothenate + AMP + diphosphate + H(+). Its pathway is cofactor biosynthesis; (R)-pantothenate biosynthesis; (R)-pantothenate from (R)-pantoate and beta-alanine: step 1/1. Catalyzes the condensation of pantoate with beta-alanine in an ATP-dependent reaction via a pantoyl-adenylate intermediate. This is Pantothenate synthetase from Corynebacterium jeikeium (strain K411).